Reading from the N-terminus, the 352-residue chain is RAD51-associated protein 1 (352 aa).

The segment covering 1–10 has biased composition (basic residues); sequence MVRPVRHKKP. Disordered regions lie at residues 1–78 and 115–144; these read MVRP…TFSI and TNVQ…HISN. Phosphoserine is present on residues S19 and S21. The interaction with DNA stretch occupies residues 30–49; the sequence is VPLNKKSRTAPKELKQDKPK. The segment covering 39-72 has biased composition (basic and acidic residues); it reads APKELKQDKPKPNLNNLRKEEIPVQEKTPKKRLP. T66 carries the post-translational modification Phosphothreonine. A phosphoserine mark is found at S120 and S124. Residues 132–144 show a composition bias toward polar residues; it reads KIETMNKSPHISN. Residues 154 to 159 carry the SIM motif motif; it reads LDKITV. The tract at residues 162-323 is disordered; the sequence is DVGGVQGKRK…RSSSSPLVVV (162 aa). Positions 188-221 are enriched in acidic residues; sequence SDGDSANDTEPDFAPGEDSEDDSDFCESEDNDED. Residues 229–247 are compositionally biased toward basic and acidic residues; the sequence is VKEIKKKEVKVKSPVEKKE. The tract at residues 243–304 is interaction with DNA; that stretch reads VEKKEKKSKS…PSAESKKPKW (62 aa). A Glycyl lysine isopeptide (Lys-Gly) (interchain with G-Cter in ubiquitin; alternate) cross-link involves residue K251. K269 is covalently cross-linked (Glycyl lysine isopeptide (Lys-Gly) (interchain with G-Cter in SUMO)). Polar residues predominate over residues 270-284; that stretch reads SESQSLPKKVSLSSD. S280 is subject to Phosphoserine. The short motif at 304–307 is the WVPP motif element; it reads WVPP. A compositionally biased stretch (low complexity) spans 306-323; the sequence is PPAASGGSRSSSSPLVVV. The interaction with RAD51 stretch occupies residues 313-352; sequence SRSSSSPLVVVSVKSPNQSLRLGLSRLARVKPLHPNATST. At S327 the chain carries Phosphoserine.

Monomer; elongated monodisperse monomer. Interacts (via C-terminal region) with RAD51; the interaction is direct. Interacts (via SIM motif) with WDR48/UAF1; WDR48/UAF1 and RAD51AP1 cooperate together to stimulate RAD51-mediated homologous recombination (HR). Interacts (via WVPP motif) with DMC1; the interaction is direct. Interacts with PALB2. Interacts with RAD52. In terms of assembly, does not interact with DMC1; lack of interaction is caused by the absence of the WVPP motif in this isoform. Post-translationally, sumoylation with SUMO2/3 by NSMCE2/MMS21 promotes stabilization, possibly by preventing ubiquitination. Sumoylation is required for alternative lengthening of telomeres (ALT) pathway. In terms of tissue distribution, highly expressed in testis and thymus. Lower levels in colon and small intestine. Little or no expression in spleen, prostate, ovary and peripheral blood leukocytes.

Its subcellular location is the chromosome. It is found in the nucleus. The protein localises to the telomere. Functionally, structure-specific DNA-binding protein involved in DNA repair by promoting RAD51-mediated homologous recombination. Acts by stimulating D-Loop formation by RAD51: specifically enhances joint molecule formation through its structure-specific DNA interaction and its interaction with RAD51. Binds single-stranded DNA (ssDNA), double-stranded DNA (dsDNA) and secondary DNA structures, such as D-loop structures: has a strong preference for branched-DNA structures that are obligatory intermediates during joint molecule formation. Cooperates with WDR48/UAF1 to stimulate RAD51-mediated homologous recombination: both WDR48/UAF1 and RAD51AP1 have coordinated role in DNA-binding during homologous recombination and DNA repair. WDR48/UAF1 and RAD51AP1 also have a coordinated role in DNA-binding to promote USP1-mediated deubiquitination of FANCD2. Also involved in meiosis by promoting DMC1-mediated homologous meiotic recombination. Key mediator of alternative lengthening of telomeres (ALT) pathway, a homology-directed repair mechanism of telomere elongation that controls proliferation in aggressive cancers, by stimulating homologous recombination. May also bind RNA; additional evidences are however required to confirm RNA-binding in vivo. In Homo sapiens (Human), this protein is RAD51-associated protein 1.